The chain runs to 737 residues: Translation initiation factor IF-2 (737 aa).

The span at 69 to 80 (EKKEEKPIRKIM) shows a compositional bias: basic and acidic residues. The tract at residues 69–130 (EKKEEKPIRK…HKNKGKKKKG (62 aa)) is disordered. Basic residues-rich tracts occupy residues 95–108 (NNKK…KNKK) and 121–130 (HKNKGKKKKG). The region spanning 237-404 (ERPPVITIMG…TILITAEILE (168 aa)) is the tr-type G domain. Residues 246–253 (GHVDHGKT) are G1. 246 to 253 (GHVDHGKT) serves as a coordination point for GTP. A G2 region spans residues 271–275 (GITQK). The segment at 292 to 295 (DTPG) is G3. GTP contacts are provided by residues 292–296 (DTPGH) and 346–349 (NKID). The segment at 346 to 349 (NKID) is G4. Residues 382–384 (SAK) are G5.

It belongs to the TRAFAC class translation factor GTPase superfamily. Classic translation factor GTPase family. IF-2 subfamily.

It localises to the cytoplasm. Its function is as follows. One of the essential components for the initiation of protein synthesis. Protects formylmethionyl-tRNA from spontaneous hydrolysis and promotes its binding to the 30S ribosomal subunits. Also involved in the hydrolysis of GTP during the formation of the 70S ribosomal complex. In Fusobacterium nucleatum subsp. nucleatum (strain ATCC 25586 / DSM 15643 / BCRC 10681 / CIP 101130 / JCM 8532 / KCTC 2640 / LMG 13131 / VPI 4355), this protein is Translation initiation factor IF-2.